Here is a 95-residue protein sequence, read N- to C-terminus: Enhancer of yellow 2 transcription factor (95 aa).

This sequence belongs to the ENY2 family. In terms of assembly, component of the nuclear pore complex (NPC)-associated AMEX complex (anchoring and mRNA export complex), composed of at least e(y)2 and xmas-2. Component of the SAGA transcription coactivator-HAT complexes, at least composed of Ada2b, e(y)2, Pcaf/Gcn5, Taf10 and Nipped-A/Trrap. Within the SAGA complex, e(y)2, Sgf11, and not/nonstop form an additional subcomplex of SAGA called the DUB module (deubiquitination module). Component of the THO complex, composed of at least e(y)2, HPR1, THO2, THOC5, THOC6 and THOC7. Interacts with e(y)1. Interacts with su(Hw) (via zinc fingers). Interacts with xmas-2; required for localization to the nuclear periphery. Interacts with the nuclear pore complex (NPC).

The protein localises to the nucleus. Its subcellular location is the nucleoplasm. It localises to the cytoplasm. Its function is as follows. Involved in mRNA export coupled transcription activation by association with both the AMEX and the SAGA complexes. The SAGA complex is a multiprotein complex that activates transcription by remodeling chromatin and mediating histone acetylation and deubiquitination. Within the SAGA complex, participates in a subcomplex that specifically deubiquitinates histone H2B. The SAGA complex is recruited to specific gene promoters by activators, where it is required for transcription. Required for nuclear receptor-mediated transactivation. Involved in transcription elongation by recruiting the THO complex onto nascent mRNA. The AMEX complex functions in docking export-competent ribonucleoprotein particles (mRNPs) to the nuclear entrance of the nuclear pore complex (nuclear basket). AMEX participates in mRNA export and accurate chromatin positioning in the nucleus by tethering genes to the nuclear periphery. This Drosophila virilis (Fruit fly) protein is Enhancer of yellow 2 transcription factor.